We begin with the raw amino-acid sequence, 181 residues long: Translation initiation factor IF-3, chloroplastic (181 aa).

The protein belongs to the IF-3 family. In terms of assembly, monomer.

The protein resides in the plastid. Its subcellular location is the chloroplast. In terms of biological role, IF-3 binds to the 30S ribosomal subunit and shifts the equilibrium between 70S ribosomes and their 50S and 30S subunits in favor of the free subunits, thus enhancing the availability of 30S subunits on which protein synthesis initiation begins. This Galdieria sulphuraria (Red alga) protein is Translation initiation factor IF-3, chloroplastic.